Reading from the N-terminus, the 265-residue chain is MATLLRPVLRRLCGLPGLQRPAAEMPLRARSDGAGPLYSHHLPTSPLQKGLLAAGSAAMALYNPYRHDMVAVLGETTGHRTLKVLRDQMRRDPEGAQILQERPRISTSTLDLGKLQSLPEGSLGREYLRFLDVNRVSPDTRAPTRFVDDEELAYVIQRYREVHDMLHTLLGMPTNILGEIVVKWFEAVQTGLPMCILGAFFGPIRLGAQSLQVLVSELIPWAVQNGRRAPCVLNLYYERRWEQSLRALREELGITAPPMHVQGLA.

The transit peptide at 1 to 30 (MATLLRPVLRRLCGLPGLQRPAAEMPLRAR) directs the protein to the mitochondrion. Ser-108 is modified (phosphoserine). Zn(2+) is bound by residues His-163, Asp-164, His-167, and Glu-179.

It belongs to the COQ4 family. In terms of assembly, component of a multi-subunit COQ enzyme complex, composed of at least COQ3, COQ4, COQ5, COQ6, COQ7 and COQ9. Zn(2+) serves as cofactor. In terms of tissue distribution, expressed ubiquitously, but at high levels in liver, lung and pancreas.

The protein localises to the mitochondrion inner membrane. It catalyses the reaction 4-hydroxy-3-methoxy-5-(all-trans-decaprenyl)benzoate + H(+) = 2-methoxy-6-(all-trans-decaprenyl)phenol + CO2. It participates in cofactor biosynthesis; ubiquinone biosynthesis. Lyase that catalyzes the C1-decarboxylation of 4-hydroxy-3-methoxy-5-(all-trans-decaprenyl)benzoic acid into 2-methoxy-6-(all-trans-decaprenyl)phenol during ubiquinone biosynthesis. In Homo sapiens (Human), this protein is Ubiquinone biosynthesis protein COQ4 homolog, mitochondrial.